Here is a 485-residue protein sequence, read N- to C-terminus: Noelin (485 aa).

The first 24 residues, 1-24 (MSVPLLKIGVVLSTMAMITNWMSQ), serve as a signal peptide directing secretion. 8 N-linked (GlcNAc...) asparagine glycosylation sites follow: Asn33, Asn103, Asn187, Asn288, Asn307, Asn394, Asn431, and Asn473. The stretch at 87-225 (RDARTKQLRQ…ERLRACMQKL (139 aa)) forms a coiled coil. Residues 226–478 (ACGKLTGISD…QTLYNVTLFH (253 aa)) enclose the Olfactomedin-like domain. Cys227 and Cys409 are joined by a disulfide.

Homotetramer; disulfide-linked. Dimer of dimers, giving rise to a V-shaped homotretramer. Isoform 1 and isoform 3 interact with RTN4R. Identified in a complex with RTN4R and LINGO1. Peripherally associated with AMPAR complex. AMPAR complex consists of an inner core made of 4 pore-forming GluA/GRIA proteins (GRIA1, GRIA2, GRIA3 and GRIA4) and 4 major auxiliary subunits arranged in a twofold symmetry. One of the two pairs of distinct binding sites is occupied either by CNIH2, CNIH3 or CACNG2, CACNG3. The other harbors CACNG2, CACNG3, CACNG4, CACNG8 or GSG1L. This inner core of AMPAR complex is complemented by outer core constituents binding directly to the GluA/GRIA proteins at sites distinct from the interaction sites of the inner core constituents. Outer core constituents include at least PRRT1, PRRT2, CKAMP44/SHISA9, FRRS1L and NRN1. The proteins of the inner and outer core serve as a platform for other, more peripherally associated AMPAR constituents, including OLFM1. Alone or in combination, these auxiliary subunits control the gating and pharmacology of the AMPAR complex and profoundly impact their biogenesis and protein processing. Interacts with OLFM2. Post-translationally, in isoform 3 and isoform 4, the signal peptide is predicted to end in position 17. As to expression, expressed in the brain (at protein level). Expressed in the brain, predominantly in the cortex and hippocampus. In the pituitary only the two A-type and in the adrenal glands only the two B-type forms were detected.

The protein localises to the secreted. Its subcellular location is the synapse. It localises to the endoplasmic reticulum. The protein resides in the cell projection. It is found in the axon. The protein localises to the perikaryon. Its function is as follows. Contributes to the regulation of axonal growth in the embryonic and adult central nervous system by inhibiting interactions between RTN4R and LINGO1. Inhibits RTN4R-mediated axon growth cone collapse. May play an important role in regulating the production of neural crest cells by the neural tube. May be required for normal responses to olfactory stimuli. In Rattus norvegicus (Rat), this protein is Noelin (Olfm1).